The sequence spans 437 residues: ATP-dependent RNA helicase SUB2 (437 aa).

Over residues 1 to 19 (MSHEAEEDLLEYSDNEQEV) the composition is skewed to acidic residues. Residues 1–45 (MSHEAEEDLLEYSDNEQEVQVDNKATEVNAEGNGESQAKDSDKKG) are disordered. The short motif at 53–81 (TGFKDFLLKPELSRAIIDCGFEHPSEVQQ) is the Q motif element. The region spanning 84–259 (IPQSIHGTDV…RRFLQNPLEI (176 aa)) is the Helicase ATP-binding domain. Residue 97–104 (AKSGLGKT) participates in ATP binding. Positions 206 to 209 (DECD) match the DECD box motif. Residues 287–432 (KLAQLLDDLE…EFPEEGVDPS (146 aa)) enclose the Helicase C-terminal domain.

This sequence belongs to the DEAD box helicase family. DECD subfamily.

Its subcellular location is the nucleus. The catalysed reaction is ATP + H2O = ADP + phosphate + H(+). In terms of biological role, ATP-binding RNA helicase involved in transcription elongation and required for the export of mRNA out of the nucleus. SUB2 also plays a role in pre-mRNA splicing and spliceosome assembly. May be involved in rDNA and telomeric silencing, and maintenance of genome integrity. The protein is ATP-dependent RNA helicase SUB2 (SUB2) of Kluyveromyces lactis (strain ATCC 8585 / CBS 2359 / DSM 70799 / NBRC 1267 / NRRL Y-1140 / WM37) (Yeast).